The following is a 773-amino-acid chain: DNA gyrase subunit B (773 aa).

Positions S416–P530 constitute a Toprim domain. Mg(2+)-binding residues include E422, D495, and D497.

This sequence belongs to the type II topoisomerase GyrB family. As to quaternary structure, heterotetramer, composed of two GyrA and two GyrB chains. In the heterotetramer, GyrA contains the active site tyrosine that forms a transient covalent intermediate with DNA, while GyrB binds cofactors and catalyzes ATP hydrolysis. Requires Mg(2+) as cofactor. The cofactor is Mn(2+). Ca(2+) serves as cofactor.

The protein localises to the cytoplasm. The enzyme catalyses ATP-dependent breakage, passage and rejoining of double-stranded DNA.. A type II topoisomerase that negatively supercoils closed circular double-stranded (ds) DNA in an ATP-dependent manner to modulate DNA topology and maintain chromosomes in an underwound state. Negative supercoiling favors strand separation, and DNA replication, transcription, recombination and repair, all of which involve strand separation. Also able to catalyze the interconversion of other topological isomers of dsDNA rings, including catenanes and knotted rings. Type II topoisomerases break and join 2 DNA strands simultaneously in an ATP-dependent manner. The polypeptide is DNA gyrase subunit B (Helicobacter pylori (strain J99 / ATCC 700824) (Campylobacter pylori J99)).